The sequence spans 81 residues: ATP synthase subunit c (81 aa).

Transmembrane regions (helical) follow at residues 5–25 and 57–77; these read IAAGALIGGGLIMAGGAIGAG and VGLVEAAYFINLAFMALFVFA.

Belongs to the ATPase C chain family. In terms of assembly, F-type ATPases have 2 components, F(1) - the catalytic core - and F(0) - the membrane proton channel. F(1) has five subunits: alpha(3), beta(3), gamma(1), delta(1), epsilon(1). F(0) has three main subunits: a(1), b(2) and c(10-14). The alpha and beta chains form an alternating ring which encloses part of the gamma chain. F(1) is attached to F(0) by a central stalk formed by the gamma and epsilon chains, while a peripheral stalk is formed by the delta and b chains.

It is found in the cell membrane. Functionally, f(1)F(0) ATP synthase produces ATP from ADP in the presence of a proton or sodium gradient. F-type ATPases consist of two structural domains, F(1) containing the extramembraneous catalytic core and F(0) containing the membrane proton channel, linked together by a central stalk and a peripheral stalk. During catalysis, ATP synthesis in the catalytic domain of F(1) is coupled via a rotary mechanism of the central stalk subunits to proton translocation. Its function is as follows. Key component of the F(0) channel; it plays a direct role in translocation across the membrane. A homomeric c-ring of between 10-14 subunits forms the central stalk rotor element with the F(1) delta and epsilon subunits. This Mycobacterium marinum (strain ATCC BAA-535 / M) protein is ATP synthase subunit c.